The primary structure comprises 327 residues: MEPVIYSFATLLIHVEFIFGNLSNGFIVLSNFWDWVIKRKLSTIDKILLTLAISRITLIWEIYTWFTSVYGPSSFAIGMKLQILYFTWILSSHFSLWFATALSIFYLLRIANCSWKIFLYLKWRLKQVIVGMLLASLVFLPGILTQRTLEERPYRYGGNTSEDSMETDFARFTELILFNLTIFSVIPFSLASISFLLLIFSLWKHLRKMQLSSRGHGDPSTKAHTNALRIMVSFLLLYSIYFLSLLLSWIAQKHHSKLVDIIGIITGLMYPSAHSFILILGNSKLMQTSLWILSHLRCRLKGENILNPSGNQVTSCYIFCIANKSVS.

Residues 1–7 (MEPVIYS) are Extracellular-facing. Residues 8–28 (FATLLIHVEFIFGNLSNGFIV) traverse the membrane as a helical segment. The Cytoplasmic segment spans residues 29–46 (LSNFWDWVIKRKLSTIDK). A helical transmembrane segment spans residues 47 to 67 (ILLTLAISRITLIWEIYTWFT). Topologically, residues 68–87 (SVYGPSSFAIGMKLQILYFT) are extracellular. The chain crosses the membrane as a helical span at residues 88 to 108 (WILSSHFSLWFATALSIFYLL). The Cytoplasmic segment spans residues 109-124 (RIANCSWKIFLYLKWR). Residues 125–145 (LKQVIVGMLLASLVFLPGILT) form a helical membrane-spanning segment. The Extracellular segment spans residues 146–179 (QRTLEERPYRYGGNTSEDSMETDFARFTELILFN). Residues asparagine 159 and asparagine 179 are each glycosylated (N-linked (GlcNAc...) asparagine). The helical transmembrane segment at 180–200 (LTIFSVIPFSLASISFLLLIF) threads the bilayer. The Cytoplasmic portion of the chain corresponds to 201-229 (SLWKHLRKMQLSSRGHGDPSTKAHTNALR). The chain crosses the membrane as a helical span at residues 230–250 (IMVSFLLLYSIYFLSLLLSWI). Residues 251–260 (AQKHHSKLVD) are Extracellular-facing. The helical transmembrane segment at 261-281 (IIGIITGLMYPSAHSFILILG) threads the bilayer. Residues 282 to 327 (NSKLMQTSLWILSHLRCRLKGENILNPSGNQVTSCYIFCIANKSVS) lie on the Cytoplasmic side of the membrane.

Belongs to the G-protein coupled receptor T2R family.

It localises to the membrane. Functionally, putative taste receptor which may play a role in the perception of bitterness. The sequence is that of Taste receptor type 2 member 102 from Rattus norvegicus (Rat).